We begin with the raw amino-acid sequence, 942 residues long: Leucine--tRNA ligase 2 (942 aa).

Residues 35–45 (PYPNSPFHLGH) carry the 'HIGH' region motif. The short motif at 619 to 623 (KMSKS) is the 'KMSKS' region element. Lys-622 contacts ATP.

Belongs to the class-I aminoacyl-tRNA synthetase family.

It is found in the cytoplasm. It carries out the reaction tRNA(Leu) + L-leucine + ATP = L-leucyl-tRNA(Leu) + AMP + diphosphate. The protein is Leucine--tRNA ligase 2 of Sulfolobus acidocaldarius (strain ATCC 33909 / DSM 639 / JCM 8929 / NBRC 15157 / NCIMB 11770).